We begin with the raw amino-acid sequence, 360 residues long: Peptide chain release factor 1 (360 aa).

Gln235 is modified (N5-methylglutamine). Residues 284-304 (KVDSERSADRKSQVGSGDRSE) are disordered.

The protein belongs to the prokaryotic/mitochondrial release factor family. Methylated by PrmC. Methylation increases the termination efficiency of RF1.

The protein localises to the cytoplasm. Peptide chain release factor 1 directs the termination of translation in response to the peptide chain termination codons UAG and UAA. This Agrobacterium fabrum (strain C58 / ATCC 33970) (Agrobacterium tumefaciens (strain C58)) protein is Peptide chain release factor 1.